The sequence spans 258 residues: Venom plasminogen activator (258 aa).

Positions 1-18 (MVLIRVLANLLILQLSYA) are cleaved as a signal peptide. The propeptide occupies 19-24 (QKSSEL). The Peptidase S1 domain occupies 25–249 (VVGGDECNIN…YTDWIQSIIS (225 aa)). Cystine bridges form between Cys31/Cys163, Cys50/Cys66, Cys98/Cys256, Cys142/Cys210, Cys174/Cys189, and Cys200/Cys225. Asn44 is a glycosylation site (N-linked (GlcNAc...) asparagine). Catalysis depends on charge relay system residues His65 and Asp110. Ser204 acts as the Charge relay system in catalysis.

It belongs to the peptidase S1 family. Snake venom subfamily. Monomer. As to expression, expressed by the venom gland.

The protein resides in the secreted. Snake venom serine protease that activates plasminogen. Shows a preferential cleavage at Arg-|-Xaa instead of Lys-|-Xaa bonds. This chain is Venom plasminogen activator, found in Agkistrodon piscivorus leucostoma (Western cottonmouth).